The following is a 229-amino-acid chain: Enolase-phosphatase E1 (229 aa).

The protein belongs to the HAD-like hydrolase superfamily. MasA/MtnC family. Monomer. Requires Mg(2+) as cofactor.

It carries out the reaction 5-methylsulfanyl-2,3-dioxopentyl phosphate + H2O = 1,2-dihydroxy-5-(methylsulfanyl)pent-1-en-3-one + phosphate. The protein operates within amino-acid biosynthesis; L-methionine biosynthesis via salvage pathway; L-methionine from S-methyl-5-thio-alpha-D-ribose 1-phosphate: step 3/6. It functions in the pathway amino-acid biosynthesis; L-methionine biosynthesis via salvage pathway; L-methionine from S-methyl-5-thio-alpha-D-ribose 1-phosphate: step 4/6. Functionally, bifunctional enzyme that catalyzes the enolization of 2,3-diketo-5-methylthiopentyl-1-phosphate (DK-MTP-1-P) into the intermediate 2-hydroxy-3-keto-5-methylthiopentenyl-1-phosphate (HK-MTPenyl-1-P), which is then dephosphorylated to form the acireductone 1,2-dihydroxy-3-keto-5-methylthiopentene (DHK-MTPene). This chain is Enolase-phosphatase E1, found in Pectobacterium atrosepticum (strain SCRI 1043 / ATCC BAA-672) (Erwinia carotovora subsp. atroseptica).